The chain runs to 70 residues: Large ribosomal subunit protein bL28 (70 aa).

It belongs to the bacterial ribosomal protein bL28 family.

The polypeptide is Large ribosomal subunit protein bL28 (Thermosipho melanesiensis (strain DSM 12029 / CIP 104789 / BI429)).